The primary structure comprises 168 residues: MPLLDSFKVDHTRMHAPAVRVAKTMTTPKGDTITVFDLRFCVPNKEILPEKGIHTLEHLFAGFMRDHLNGNGVEIIDISPMGCRTGFYMSLIGTPSEQQVADAWLASMQDVLNVKDQSKIPELNEYQCGTYQMHSLAEAQQIAQNVLARKVAVNKNEELTLDEGLLNA.

Positions 54, 58, and 128 each coordinate Fe cation.

Belongs to the LuxS family. In terms of assembly, homodimer. Fe cation is required as a cofactor.

It carries out the reaction S-(5-deoxy-D-ribos-5-yl)-L-homocysteine = (S)-4,5-dihydroxypentane-2,3-dione + L-homocysteine. Functionally, involved in the synthesis of autoinducer 2 (AI-2) which is secreted by bacteria and is used to communicate both the cell density and the metabolic potential of the environment. The regulation of gene expression in response to changes in cell density is called quorum sensing. Catalyzes the transformation of S-ribosylhomocysteine (RHC) to homocysteine (HC) and 4,5-dihydroxy-2,3-pentadione (DPD). The sequence is that of S-ribosylhomocysteine lyase from Neisseria meningitidis serogroup A / serotype 4A (strain DSM 15465 / Z2491).